The sequence spans 369 residues: Phospho-N-acetylmuramoyl-pentapeptide-transferase (369 aa).

10 helical membrane-spanning segments follow: residues 3–23 (ALLG…PLFI), 53–73 (GGIV…LLTW), 81–101 (VTPS…VGFL), 118–138 (WQKI…AITL), 162–182 (FMAL…CLIV), 198–218 (LAAG…FWQF), 240–260 (PLDL…FLWW), 267–287 (IFMG…LAIL), 290–310 (TELL…SVVL), and 347–367 (FWII…LEWI).

Belongs to the glycosyltransferase 4 family. MraY subfamily. Mg(2+) is required as a cofactor.

The protein resides in the cell membrane. It carries out the reaction UDP-N-acetyl-alpha-D-muramoyl-L-alanyl-gamma-D-glutamyl-meso-2,6-diaminopimeloyl-D-alanyl-D-alanine + di-trans,octa-cis-undecaprenyl phosphate = di-trans,octa-cis-undecaprenyl diphospho-N-acetyl-alpha-D-muramoyl-L-alanyl-D-glutamyl-meso-2,6-diaminopimeloyl-D-alanyl-D-alanine + UMP. It functions in the pathway cell wall biogenesis; peptidoglycan biosynthesis. Its function is as follows. Catalyzes the initial step of the lipid cycle reactions in the biosynthesis of the cell wall peptidoglycan: transfers peptidoglycan precursor phospho-MurNAc-pentapeptide from UDP-MurNAc-pentapeptide onto the lipid carrier undecaprenyl phosphate, yielding undecaprenyl-pyrophosphoryl-MurNAc-pentapeptide, known as lipid I. The polypeptide is Phospho-N-acetylmuramoyl-pentapeptide-transferase (Clavibacter sepedonicus (Clavibacter michiganensis subsp. sepedonicus)).